The chain runs to 341 residues: Ferredoxin--NADP reductase 2 (341 aa).

Residues aspartate 42, glutamine 50, tyrosine 55, isoleucine 95, phenylalanine 129, aspartate 294, and serine 335 each coordinate FAD.

Belongs to the ferredoxin--NADP reductase type 2 family. Homodimer. FAD is required as a cofactor.

It catalyses the reaction 2 reduced [2Fe-2S]-[ferredoxin] + NADP(+) + H(+) = 2 oxidized [2Fe-2S]-[ferredoxin] + NADPH. This chain is Ferredoxin--NADP reductase 2, found in Chloroherpeton thalassium (strain ATCC 35110 / GB-78).